A 389-amino-acid polypeptide reads, in one-letter code: Succinate--CoA ligase [ADP-forming] subunit beta (389 aa).

The 236-residue stretch at Lys9 to Glu244 folds into the ATP-grasp domain. ATP contacts are provided by residues Lys46, Gly53–Gly55, Glu99, Ala102, and Glu107. 2 residues coordinate Mg(2+): Asn199 and Asp213. Substrate contacts are provided by residues Asn264 and Gly321 to Met323.

Belongs to the succinate/malate CoA ligase beta subunit family. In terms of assembly, heterotetramer of two alpha and two beta subunits. It depends on Mg(2+) as a cofactor.

The enzyme catalyses succinate + ATP + CoA = succinyl-CoA + ADP + phosphate. The catalysed reaction is GTP + succinate + CoA = succinyl-CoA + GDP + phosphate. It functions in the pathway carbohydrate metabolism; tricarboxylic acid cycle; succinate from succinyl-CoA (ligase route): step 1/1. In terms of biological role, succinyl-CoA synthetase functions in the citric acid cycle (TCA), coupling the hydrolysis of succinyl-CoA to the synthesis of either ATP or GTP and thus represents the only step of substrate-level phosphorylation in the TCA. The beta subunit provides nucleotide specificity of the enzyme and binds the substrate succinate, while the binding sites for coenzyme A and phosphate are found in the alpha subunit. The sequence is that of Succinate--CoA ligase [ADP-forming] subunit beta from Polynucleobacter necessarius subsp. necessarius (strain STIR1).